Here is a 258-residue protein sequence, read N- to C-terminus: Ribosomal RNA small subunit methyltransferase A (258 aa).

The S-adenosyl-L-methionine site is built by His13, Leu15, Gly40, Glu61, Asp85, and Asn106.

The protein belongs to the class I-like SAM-binding methyltransferase superfamily. rRNA adenine N(6)-methyltransferase family. RsmA subfamily.

It localises to the cytoplasm. It catalyses the reaction adenosine(1518)/adenosine(1519) in 16S rRNA + 4 S-adenosyl-L-methionine = N(6)-dimethyladenosine(1518)/N(6)-dimethyladenosine(1519) in 16S rRNA + 4 S-adenosyl-L-homocysteine + 4 H(+). Functionally, specifically dimethylates two adjacent adenosines (A1518 and A1519) in the loop of a conserved hairpin near the 3'-end of 16S rRNA in the 30S particle. May play a critical role in biogenesis of 30S subunits. This chain is Ribosomal RNA small subunit methyltransferase A, found in Porphyromonas gingivalis (strain ATCC 33277 / DSM 20709 / CIP 103683 / JCM 12257 / NCTC 11834 / 2561).